The sequence spans 98 residues: NADH-ubiquinone oxidoreductase chain 4L (98 aa).

A run of 3 helical transmembrane segments spans residues 2-22 (SPAV…TLMF), 26-46 (LMST…LATI), and 59-79 (IPIA…ALLA).

Belongs to the complex I subunit 4L family. As to quaternary structure, core subunit of respiratory chain NADH dehydrogenase (Complex I) which is composed of 45 different subunits.

The protein resides in the mitochondrion inner membrane. It catalyses the reaction a ubiquinone + NADH + 5 H(+)(in) = a ubiquinol + NAD(+) + 4 H(+)(out). Core subunit of the mitochondrial membrane respiratory chain NADH dehydrogenase (Complex I) which catalyzes electron transfer from NADH through the respiratory chain, using ubiquinone as an electron acceptor. Part of the enzyme membrane arm which is embedded in the lipid bilayer and involved in proton translocation. The chain is NADH-ubiquinone oxidoreductase chain 4L (MT-ND4L) from Alexandromys kikuchii (Taiwan vole).